The chain runs to 606 residues: UvrABC system protein C (606 aa).

Residues glutamine 19–isoleucine 97 form the GIY-YIG domain. In terms of domain architecture, UVR spans glutamate 207–isoleucine 242.

Belongs to the UvrC family. Interacts with UvrB in an incision complex.

The protein localises to the cytoplasm. The UvrABC repair system catalyzes the recognition and processing of DNA lesions. UvrC both incises the 5' and 3' sides of the lesion. The N-terminal half is responsible for the 3' incision and the C-terminal half is responsible for the 5' incision. The protein is UvrABC system protein C of Wolbachia sp. subsp. Brugia malayi (strain TRS).